Reading from the N-terminus, the 497-residue chain is UDP-N-acetylmuramoyl-L-alanyl-D-glutamate--2,6-diaminopimelate ligase (497 aa).

Positions 27 and 29 each coordinate UDP-N-acetyl-alpha-D-muramoyl-L-alanyl-D-glutamate. 116 to 122 contacts ATP; that stretch reads GTNGKTT. Residues Asn-157, 158–159, Ser-185, Gln-191, and Arg-193 each bind UDP-N-acetyl-alpha-D-muramoyl-L-alanyl-D-glutamate; that span reads TT. Lys-225 bears the N6-carboxylysine mark. Residues Arg-392, 416 to 419, Gly-467, and Glu-471 contribute to the meso-2,6-diaminopimelate site; that span reads DNPR. Positions 416 to 419 match the Meso-diaminopimelate recognition motif motif; that stretch reads DNPR.

The protein belongs to the MurCDEF family. MurE subfamily. Mg(2+) is required as a cofactor. Post-translationally, carboxylation is probably crucial for Mg(2+) binding and, consequently, for the gamma-phosphate positioning of ATP.

The protein resides in the cytoplasm. The enzyme catalyses UDP-N-acetyl-alpha-D-muramoyl-L-alanyl-D-glutamate + meso-2,6-diaminopimelate + ATP = UDP-N-acetyl-alpha-D-muramoyl-L-alanyl-gamma-D-glutamyl-meso-2,6-diaminopimelate + ADP + phosphate + H(+). The protein operates within cell wall biogenesis; peptidoglycan biosynthesis. Functionally, catalyzes the addition of meso-diaminopimelic acid to the nucleotide precursor UDP-N-acetylmuramoyl-L-alanyl-D-glutamate (UMAG) in the biosynthesis of bacterial cell-wall peptidoglycan. In Buchnera aphidicola subsp. Schizaphis graminum (strain Sg), this protein is UDP-N-acetylmuramoyl-L-alanyl-D-glutamate--2,6-diaminopimelate ligase.